The following is a 97-amino-acid chain: Co-chaperonin GroES (97 aa).

This sequence belongs to the GroES chaperonin family. As to quaternary structure, heptamer of 7 subunits arranged in a ring. Interacts with the chaperonin GroEL.

The protein localises to the cytoplasm. Together with the chaperonin GroEL, plays an essential role in assisting protein folding. The GroEL-GroES system forms a nano-cage that allows encapsulation of the non-native substrate proteins and provides a physical environment optimized to promote and accelerate protein folding. GroES binds to the apical surface of the GroEL ring, thereby capping the opening of the GroEL channel. This chain is Co-chaperonin GroES, found in Burkholderia vietnamiensis.